A 692-amino-acid chain; its full sequence is Aspartate--tRNA ligase, mitochondrial (692 aa).

Residues 1 to 61 constitute a mitochondrion transit peptide; it reads MNRVILKDSK…RNFTNTINNN (61 aa). Residue Glu264 coordinates L-aspartate. Residues 287 to 290 form an aspartate region; that stretch reads QQYK. Arg309 is a binding site for L-aspartate. ATP is bound by residues 309–311 and Glu590; that span reads RDE. Arg597 is a binding site for L-aspartate. 642–645 contributes to the ATP binding site; it reads GFDR.

It belongs to the class-II aminoacyl-tRNA synthetase family. Type 1 subfamily.

The protein localises to the mitochondrion matrix. It catalyses the reaction tRNA(Asp) + L-aspartate + ATP = L-aspartyl-tRNA(Asp) + AMP + diphosphate. The sequence is that of Aspartate--tRNA ligase, mitochondrial (maspS) from Dictyostelium discoideum (Social amoeba).